A 68-amino-acid chain; its full sequence is Protein SlyX homolog (68 aa).

The protein belongs to the SlyX family.

This Brucella abortus (strain S19) protein is Protein SlyX homolog.